The following is a 209-amino-acid chain: Molybdenum cofactor guanylyltransferase (209 aa).

GTP contacts are provided by residues 13 to 15 (LAG), K26, N54, D74, and D104. Residue D104 coordinates Mg(2+).

Belongs to the MobA family. Monomer. Requires Mg(2+) as cofactor.

The protein resides in the cytoplasm. The enzyme catalyses Mo-molybdopterin + GTP + H(+) = Mo-molybdopterin guanine dinucleotide + diphosphate. Transfers a GMP moiety from GTP to Mo-molybdopterin (Mo-MPT) cofactor (Moco or molybdenum cofactor) to form Mo-molybdopterin guanine dinucleotide (Mo-MGD) cofactor. The protein is Molybdenum cofactor guanylyltransferase of Acinetobacter baumannii (strain ATCC 17978 / DSM 105126 / CIP 53.77 / LMG 1025 / NCDC KC755 / 5377).